A 1177-amino-acid chain; its full sequence is Lon protease homolog, mitochondrial (1177 aa).

2 disordered regions span residues Arg72–Ala197 and Ala353–Thr386. Positions Arg103–Lys150 are enriched in basic and acidic residues. Over residues Thr154 to Ser182 the composition is skewed to low complexity. A Lon N-terminal domain is found at Ile203–His505. Over residues Ala353–Asp383 the composition is skewed to basic and acidic residues. Residue Gly657–Thr664 coordinates ATP. Basic and acidic residues predominate over residues Glu883–Glu916. The interval Glu883–Val932 is disordered. Residues Asp964–Gly1150 form the Lon proteolytic domain. Active-site residues include Ser1056 and Lys1099.

It belongs to the peptidase S16 family. Homohexamer or homoheptamer. Organized in a ring with a central cavity.

Its subcellular location is the mitochondrion matrix. It catalyses the reaction Hydrolysis of proteins in presence of ATP.. Its function is as follows. ATP-dependent serine protease that mediates the selective degradation of misfolded, unassembled or oxidatively damaged polypeptides as well as certain short-lived regulatory proteins in the mitochondrial matrix. May also have a chaperone function in the assembly of inner membrane protein complexes. Participates in the regulation of mitochondrial gene expression and in the maintenance of the integrity of the mitochondrial genome. Binds to mitochondrial DNA in a site-specific manner. The polypeptide is Lon protease homolog, mitochondrial (Yarrowia lipolytica (strain CLIB 122 / E 150) (Yeast)).